The sequence spans 617 residues: Sphingosine kinase 2 (617 aa).

The required for binding to sulfatide and phosphoinositides and for membrane localization stretch occupies residues 1–140; it reads MAPPPLLPVA…LSGDQEITPE (140 aa). The Nuclear localization signal motif lies at 87 to 95; that stretch reads RGRRGGRRR. Positions 143–290 constitute a DAGKc domain; sequence PRKPRLLILV…LDLLSVTLAS (148 aa). Residues 153-155 and 185-189 contribute to the ATP site; these read NPF and TERQN. 210 to 213 contributes to the substrate binding site; it reads SGDG. Asp212 functions as the Proton donor/acceptor in the catalytic mechanism. ATP-binding positions include Glu217 and 242 to 244; that span reads GSG. Asp309 contacts substrate. Positions 316 and 322 each coordinate ATP. Residues Ser358 and Ser364 each carry the phosphoserine modification. The tract at residues 371-472 is disordered; it reads APAPAATHSP…GFLPPTHSAP (102 aa). Thr377 carries the post-translational modification Phosphothreonine. The short motif at 381 to 390 is the Nuclear export signal element; sequence LHRSVSDLPL. A phosphoserine mark is found at Ser384 and Ser386. Residues 412 to 426 show a composition bias toward gly residues; it reads NGGGPELTGDWGGAG. Thr578 carries the post-translational modification Phosphothreonine. Position 586-588 (586-588) interacts with ATP; the sequence is DGE.

In terms of assembly, interacts with histone H3. Interacts with HDAC1, HDAC2, MBD2 and SIN3A. Interacts with EEF1A1; the interaction enhances SPHK2 kinase activity. Interacts with PHB2. It depends on Mg(2+) as a cofactor. Post-translationally, phosphorylated by PKD on Ser-384 and Ser-386 upon PMA treatment. Phosphorylation induces export from the nucleus to the cytoplasm. Phosphorylated by MAPK1 and MAPK2 at Thr-578, phosphorylation is induced by agonists such as EGF and PMA and increases kinase activity. In terms of processing, cleaved by CASP1 in apoptotic cells. The truncated form is released from cells. In terms of tissue distribution, expressed in heart, brain, liver, kidney and testis. Expressed by mast cells (at protein level). In the substantia nigra, expressed by dopaminergic neurons (at protein level).

The protein localises to the lysosome membrane. The protein resides in the cytoplasm. It is found in the cell membrane. It localises to the endoplasmic reticulum. Its subcellular location is the nucleus. The protein localises to the mitochondrion inner membrane. The catalysed reaction is a sphingoid base + ATP = a sphingoid 1-phosphate + ADP + H(+). It catalyses the reaction sphing-4-enine + ATP = sphing-4-enine 1-phosphate + ADP + H(+). It carries out the reaction sphinganine + ATP = sphinganine 1-phosphate + ADP + H(+). The enzyme catalyses (4R)-hydroxysphinganine + ATP = (4R)-hydroxysphinganine 1-phosphate + ADP + H(+). Functionally, catalyzes the phosphorylation of sphingosine to form sphingosine-1-phosphate (SPP), a lipid mediator with both intra- and extracellular functions. Also acts on D-erythro-dihydrosphingosine, D-erythro-sphingosine and L-threo-dihydrosphingosine. Binds phosphoinositides. In contrast to prosurvival SPHK1, has a positive effect on intracellular ceramide levels, inhibits cells growth and enhances apoptosis. In mitochondria, is important for cytochrome-c oxidase assembly and mitochondrial respiration. The SPP produced in mitochondria binds PHB2 and modulates the regulation via PHB2 of complex IV assembly and respiration. In nucleus, plays a role in epigenetic regulation of gene expression. Interacts with HDAC1 and HDAC2 and, through SPP production, inhibits their enzymatic activity, preventing the removal of acetyl groups from lysine residues with histones. Up-regulates acetylation of histone H3-K9, histone H4-K5 and histone H2B-K12. In nucleus, may have an inhibitory effect on DNA synthesis and cell cycle. In mast cells, is the main regulator of SPP production which mediates calcium influx, NF-kappa-B activation, cytokine production, such as TNF and IL6, and degranulation of mast cells. In dopaminergic neurons, is involved in promoting mitochondrial functions regulating ATP and ROS levels. Also involved in the regulation of glucose and lipid metabolism. This is Sphingosine kinase 2 from Mus musculus (Mouse).